A 302-amino-acid chain; its full sequence is Acetaldehyde dehydrogenase 2 (302 aa).

The active-site Acyl-thioester intermediate is the Cys-130. Residues 161 to 169 (SVGPGTRRN) and Asn-272 contribute to the NAD(+) site.

The protein belongs to the acetaldehyde dehydrogenase family.

The enzyme catalyses acetaldehyde + NAD(+) + CoA = acetyl-CoA + NADH + H(+). This chain is Acetaldehyde dehydrogenase 2, found in Cupriavidus necator (strain ATCC 17699 / DSM 428 / KCTC 22496 / NCIMB 10442 / H16 / Stanier 337) (Ralstonia eutropha).